A 57-amino-acid chain; its full sequence is Large ribosomal subunit protein bL32 (57 aa).

The span at 1–22 shows a compositional bias: basic residues; the sequence is MAVPKKKTSKAKRDQRRAHWRR. Residues 1 to 35 form a disordered region; sequence MAVPKKKTSKAKRDQRRAHWRRQASSQAQKALSLG.

This sequence belongs to the bacterial ribosomal protein bL32 family.

The polypeptide is Large ribosomal subunit protein bL32 (rpmF) (Synechocystis sp. (strain ATCC 27184 / PCC 6803 / Kazusa)).